Reading from the N-terminus, the 484-residue chain is UDP-N-acetylmuramoyl-L-alanyl-D-glutamate--L-lysine ligase (484 aa).

Ser43 is a binding site for UDP-N-acetyl-alpha-D-muramoyl-L-alanyl-D-glutamate. An ATP-binding site is contributed by 119–125 (GTKGKTT). UDP-N-acetyl-alpha-D-muramoyl-L-alanyl-D-glutamate contacts are provided by residues 161-162 (TT), Ser188, and Arg196. Lys230 is subject to N6-carboxylysine. The L-lysine recognition motif signature appears at 405 to 408 (DDPN).

The protein belongs to the MurCDEF family. MurE subfamily. In terms of processing, carboxylation is probably crucial for Mg(2+) binding and, consequently, for the gamma-phosphate positioning of ATP.

It is found in the cytoplasm. It catalyses the reaction UDP-N-acetyl-alpha-D-muramoyl-L-alanyl-D-glutamate + L-lysine + ATP = UDP-N-acetyl-alpha-D-muramoyl-L-alanyl-gamma-D-glutamyl-L-lysine + ADP + phosphate + H(+). It participates in cell wall biogenesis; peptidoglycan biosynthesis. Its function is as follows. Catalyzes the addition of L-lysine to the nucleotide precursor UDP-N-acetylmuramoyl-L-alanyl-D-glutamate (UMAG) in the biosynthesis of bacterial cell-wall peptidoglycan. This Streptococcus agalactiae serotype V (strain ATCC BAA-611 / 2603 V/R) protein is UDP-N-acetylmuramoyl-L-alanyl-D-glutamate--L-lysine ligase.